A 460-amino-acid polypeptide reads, in one-letter code: A-type ATP synthase subunit B (460 aa).

The protein belongs to the ATPase alpha/beta chains family. Has multiple subunits with at least A(3), B(3), C, D, E, F, H, I and proteolipid K(x).

The protein localises to the cell membrane. Functionally, component of the A-type ATP synthase that produces ATP from ADP in the presence of a proton gradient across the membrane. The B chain is a regulatory subunit. In Thermoplasma acidophilum (strain ATCC 25905 / DSM 1728 / JCM 9062 / NBRC 15155 / AMRC-C165), this protein is A-type ATP synthase subunit B.